The following is a 78-amino-acid chain: MAKAAVRKPKKKVCVFCKDKVHYIDYKDTSLLRKFISDRGKIRARRVTGNCSQHQRDVATAVKNSREMALLPYTSTAR.

It belongs to the bacterial ribosomal protein bS18 family. In terms of assembly, part of the 30S ribosomal subunit. Forms a tight heterodimer with protein bS6.

Its function is as follows. Binds as a heterodimer with protein bS6 to the central domain of the 16S rRNA, where it helps stabilize the platform of the 30S subunit. The chain is Small ribosomal subunit protein bS18 from Parafrankia sp. (strain EAN1pec).